The primary structure comprises 513 residues: ATP synthase subunit alpha (513 aa).

169 to 176 (GDRQIGKT) provides a ligand contact to ATP.

It belongs to the ATPase alpha/beta chains family. As to quaternary structure, F-type ATPases have 2 components, CF(1) - the catalytic core - and CF(0) - the membrane proton channel. CF(1) has five subunits: alpha(3), beta(3), gamma(1), delta(1), epsilon(1). CF(0) has three main subunits: a(1), b(2) and c(9-12). The alpha and beta chains form an alternating ring which encloses part of the gamma chain. CF(1) is attached to CF(0) by a central stalk formed by the gamma and epsilon chains, while a peripheral stalk is formed by the delta and b chains.

The protein resides in the cell inner membrane. It carries out the reaction ATP + H2O + 4 H(+)(in) = ADP + phosphate + 5 H(+)(out). Its function is as follows. Produces ATP from ADP in the presence of a proton gradient across the membrane. The alpha chain is a regulatory subunit. The polypeptide is ATP synthase subunit alpha (Shewanella piezotolerans (strain WP3 / JCM 13877)).